Consider the following 278-residue polypeptide: Potassium/proton antiporter CemA (278 aa).

4 consecutive transmembrane segments (helical) span residues 61 to 81 (VVFL…FLFG), 154 to 174 (CAIT…SILI), 203 to 223 (IILF…EVII), and 238 to 258 (FIFV…KYWI).

It belongs to the CemA family.

The protein localises to the plastid. It localises to the chloroplast inner membrane. The enzyme catalyses K(+)(in) + H(+)(out) = K(+)(out) + H(+)(in). In terms of biological role, contributes to K(+)/H(+) antiport activity by supporting proton efflux to control proton extrusion and homeostasis in chloroplasts in a light-dependent manner to modulate photosynthesis. Prevents excessive induction of non-photochemical quenching (NPQ) under continuous-light conditions. Indirectly promotes efficient inorganic carbon uptake into chloroplasts. This Gracilaria tenuistipitata var. liui (Red alga) protein is Potassium/proton antiporter CemA.